Here is a 144-residue protein sequence, read N- to C-terminus: Small ribosomal subunit protein uS12 (144 aa).

At Asp103 the chain carries 3-methylthioaspartic acid. The disordered stretch occupies residues 125 to 144; the sequence is QQGRSRYGAKKGKAAPAKKK. Residues 131-144 show a composition bias toward basic residues; the sequence is YGAKKGKAAPAKKK.

This sequence belongs to the universal ribosomal protein uS12 family. Part of the 30S ribosomal subunit. Contacts proteins S8 and S17. May interact with IF1 in the 30S initiation complex.

In terms of biological role, with S4 and S5 plays an important role in translational accuracy. Interacts with and stabilizes bases of the 16S rRNA that are involved in tRNA selection in the A site and with the mRNA backbone. Located at the interface of the 30S and 50S subunits, it traverses the body of the 30S subunit contacting proteins on the other side and probably holding the rRNA structure together. The combined cluster of proteins S8, S12 and S17 appears to hold together the shoulder and platform of the 30S subunit. This Dehalococcoides mccartyi (strain ATCC BAA-2100 / JCM 16839 / KCTC 5957 / BAV1) protein is Small ribosomal subunit protein uS12.